The primary structure comprises 369 residues: Ribosomal RNA large subunit methyltransferase G (369 aa).

Belongs to the methyltransferase superfamily. RlmG family.

The protein localises to the cytoplasm. The catalysed reaction is guanosine(1835) in 23S rRNA + S-adenosyl-L-methionine = N(2)-methylguanosine(1835) in 23S rRNA + S-adenosyl-L-homocysteine + H(+). Functionally, specifically methylates the guanine in position 1835 (m2G1835) of 23S rRNA. The chain is Ribosomal RNA large subunit methyltransferase G from Magnetococcus marinus (strain ATCC BAA-1437 / JCM 17883 / MC-1).